Consider the following 215-residue polypeptide: Adenylate kinase (215 aa).

10-15 (GAGKGT) serves as a coordination point for ATP. The segment at 30–59 (STGDMLRAAVKAGTPIGLKAKAVMEAGELV) is NMP. AMP contacts are provided by residues threonine 31, arginine 36, 57–59 (ELV), 85–88 (GYPR), and glutamine 92. The segment at 126–163 (GRYTCANCGEGYHDRFKQPKVAGVCDVCGSAEFKRRPD) is LID. Residue arginine 127 coordinates ATP. Positions 130, 133, 150, and 153 each coordinate Zn(2+). Residues arginine 160 and arginine 172 each contribute to the AMP site. ATP is bound at residue alanine 200.

The protein belongs to the adenylate kinase family. As to quaternary structure, monomer.

Its subcellular location is the cytoplasm. It catalyses the reaction AMP + ATP = 2 ADP. It functions in the pathway purine metabolism; AMP biosynthesis via salvage pathway; AMP from ADP: step 1/1. Catalyzes the reversible transfer of the terminal phosphate group between ATP and AMP. Plays an important role in cellular energy homeostasis and in adenine nucleotide metabolism. The sequence is that of Adenylate kinase from Rhizorhabdus wittichii (strain DSM 6014 / CCUG 31198 / JCM 15750 / NBRC 105917 / EY 4224 / RW1) (Sphingomonas wittichii).